The chain runs to 440 residues: Trigger factor (440 aa).

The PPIase FKBP-type domain occupies 163-248 (GDTVNIDFDG…INEIKYKNVP (86 aa)).

This sequence belongs to the FKBP-type PPIase family. Tig subfamily.

The protein localises to the cytoplasm. The enzyme catalyses [protein]-peptidylproline (omega=180) = [protein]-peptidylproline (omega=0). Functionally, involved in protein export. Acts as a chaperone by maintaining the newly synthesized protein in an open conformation. Functions as a peptidyl-prolyl cis-trans isomerase. This Staphylococcus carnosus (strain TM300) protein is Trigger factor.